Reading from the N-terminus, the 313-residue chain is Adhesin MafA 2 (313 aa).

An N-terminal signal peptide occupies residues 1–14 (MKTLLLLIPLVLTA). Cys-15 carries N-palmitoyl cysteine lipidation. A lipid anchor (S-diacylglycerol cysteine) is attached at Cys-15. Positions 282–297 (GDTTAQNRPDFKQNNG) are enriched in polar residues. The tract at residues 282–313 (GDTTAQNRPDFKQNNGKKPDVGNEVIRRRKGG) is disordered.

This sequence belongs to the MafA family.

The protein localises to the cell outer membrane. The protein is Adhesin MafA 2 (mafA2) of Neisseria meningitidis serogroup C / serotype 2a (strain ATCC 700532 / DSM 15464 / FAM18).